Consider the following 203-residue polypeptide: MKNDSMKSQYRINEQIRAKEVRIVGDDVEPKVYPIFQALKLAEEKELDLVEISPNAQPPVCRIIDYSKFLYQLKKRQKEQKAKQVKVNVKEIRFGPQTDDHDYNFKLKHAKGFLEDGDKVKAYVFFKGRSILFKEQGEVLLLRFANDLEDYAKVDQLPVLEGKRMTIQLSPKKKESATKKPATPKPATPAAVKAEKPAGDNEE.

The segment at 168–203 is disordered; it reads QLSPKKKESATKKPATPKPATPAAVKAEKPAGDNEE. A compositionally biased stretch (basic and acidic residues) spans 193–203; that stretch reads KAEKPAGDNEE.

Belongs to the IF-3 family. Monomer.

It localises to the cytoplasm. Its function is as follows. IF-3 binds to the 30S ribosomal subunit and shifts the equilibrium between 70S ribosomes and their 50S and 30S subunits in favor of the free subunits, thus enhancing the availability of 30S subunits on which protein synthesis initiation begins. The chain is Translation initiation factor IF-3 from Bacteroides fragilis (strain ATCC 25285 / DSM 2151 / CCUG 4856 / JCM 11019 / LMG 10263 / NCTC 9343 / Onslow / VPI 2553 / EN-2).